Reading from the N-terminus, the 830-residue chain is MQERKYNPKDIESKWQQFWTEHKSFEPFDIDIATSDSMKKKYILSMFPYPSGAIHMGHVRNYCIGDALARNYRQNGYNVLHPMGWDAFGMPAENAAIKHKTHPKTWTYSNIDTMRKELATLGLSFSKEREFATSDAIYTRFEQEFFIKMWERGLIYRKEAYLNWCPKDKTILANEQVIEGKCWRCDTPVVQKQMFQYYIKITDYADELLECLNKLEGHWPSQVLSMQRNWIGKSKGLSFTFDFSVDSLQKLGNGKVKLEVFTTRPDTIYGVTYCAVAPEHPIVQQLIENKSLDESVIKSIEAIKNTTARARAMSEKVGFDLGVYVIHPLTQEKLPVWVANFVLMDYGSGAVMSVPMHDERDFEFAKTYALPFKCVLTKEIDGEEPTQEICAAYEEGFLINSGEFSGMSSSQAKERIIAHFENASIGKGITNYRLRDWGVSRQRYWGAPIPMVHCQSCGIVPEKIENLPITLPEDVVIDGEGNPLDKHLVWKDCLCPKCGKKAQRESDTMDTFIQSSWYFLRYSTPRKLWEKQAFDKESLTYWLNVDEYIGGIEHAILHLLYARFWTKVLRDLGYIEIDEPFANLLTQGMVLKDGAKMSKSKGNIVNPNELIAHYGADTARLFVLFAAPPTRELEWNDKAVEGAHRFLKRLWERAEHIESCTQKPHINHKTLQKNEQYARQKVYEALQKSNEIFSKKQSGYAFNTLIAASMEAFNALNEQENPLVWTEGYFVLLHILEPIVPHICWELSEQYFRRCNFAPLSVDKDALTKESVIYAITINGKKRAEVEMPLGLSKEEIIIQAKESVPKWLEGVEILKEIIVPNKLVNLVVK.

The 'HIGH' region motif lies at 48-58 (PYPSGAIHMGH). Residues 596–600 (KMSKS) carry the 'KMSKS' region motif. Lysine 599 is a binding site for ATP.

This sequence belongs to the class-I aminoacyl-tRNA synthetase family.

The protein resides in the cytoplasm. It carries out the reaction tRNA(Leu) + L-leucine + ATP = L-leucyl-tRNA(Leu) + AMP + diphosphate. The protein is Leucine--tRNA ligase of Helicobacter hepaticus (strain ATCC 51449 / 3B1).